Reading from the N-terminus, the 267-residue chain is uncharacterized protein (267 aa).

Phosphoserine is present on residues Ser-210 and Ser-224.

In terms of tissue distribution, testis. Down-regulated in men with spermatocyte arrest.

Essential for normal spermatogenesis and male fertility. This is an uncharacterized protein from Homo sapiens (Human).